Reading from the N-terminus, the 480-residue chain is Aspartyl/glutamyl-tRNA(Asn/Gln) amidotransferase subunit B (480 aa).

It belongs to the GatB/GatE family. GatB subfamily. Heterotrimer of A, B and C subunits.

It carries out the reaction L-glutamyl-tRNA(Gln) + L-glutamine + ATP + H2O = L-glutaminyl-tRNA(Gln) + L-glutamate + ADP + phosphate + H(+). The catalysed reaction is L-aspartyl-tRNA(Asn) + L-glutamine + ATP + H2O = L-asparaginyl-tRNA(Asn) + L-glutamate + ADP + phosphate + 2 H(+). Functionally, allows the formation of correctly charged Asn-tRNA(Asn) or Gln-tRNA(Gln) through the transamidation of misacylated Asp-tRNA(Asn) or Glu-tRNA(Gln) in organisms which lack either or both of asparaginyl-tRNA or glutaminyl-tRNA synthetases. The reaction takes place in the presence of glutamine and ATP through an activated phospho-Asp-tRNA(Asn) or phospho-Glu-tRNA(Gln). This chain is Aspartyl/glutamyl-tRNA(Asn/Gln) amidotransferase subunit B, found in Streptococcus pneumoniae (strain Hungary19A-6).